A 347-amino-acid polypeptide reads, in one-letter code: Protein N-terminal asparagine amidohydrolase (347 aa).

It carries out the reaction N-terminal L-asparaginyl-[protein] + H2O + H(+) = N-terminal L-aspartyl-[protein] + NH4(+). N-terminal asparagine deamidase that mediates deamidation of N-terminal asparagine residues to aspartate. Required for the ubiquitin-dependent turnover of intracellular proteins that initiate with Met-Asn. These proteins are acetylated on the retained initiator methionine and can subsequently be modified by the removal of N-acetyl methionine by acylaminoacid hydrolase (AAH). Conversion of the resulting N-terminal asparagine to aspartate by NTAN1 renders the protein susceptible to arginylation, polyubiquitination and degradation as specified by the N-end rule. This enzyme does not act on substrates with internal or C-terminal asparagines and does not act on glutamine residues in any position. Does not seem to be involved in immune response, unlike the N-terminal glutamine amidohydrolase NTAQ1. The polypeptide is Protein N-terminal asparagine amidohydrolase (Arabidopsis thaliana (Mouse-ear cress)).